Reading from the N-terminus, the 465-residue chain is CUGBP Elav-like family member 3 (465 aa).

2 consecutive RRM domains span residues 7 to 88 (IKLF…PADS) and 95 to 174 (KLFV…FADT). 2 disordered regions span residues 283-311 (PVPTQPTGQPAPDALYPNGVHPYPAQSPA) and 345-379 (PPALVAQQPPPPPQQQQQQQQQQQQQQQQREGPDG). The span at 345 to 358 (PPALVAQQPPPPPQ) shows a compositional bias: pro residues. A compositionally biased stretch (low complexity) spans 359-373 (QQQQQQQQQQQQQQQ). One can recognise an RRM 3 domain in the interval 380–458 (CNIFIYHLPQ…KRLKVQLKRP (79 aa)).

Belongs to the CELF/BRUNOL family.

Its subcellular location is the nucleus. It localises to the cytoplasm. Functionally, RNA-binding protein involved in the regulation of pre-mRNA alternative splicing. Mediates exon inclusion and/or exclusion in pre-mRNA that are subject to tissue-specific and developmentally regulated alternative splicing. Specifically activates exon 5 inclusion of cardiac isoforms of TNNT2 during heart remodeling at the juvenile to adult transition. Activates the splicing of MAPT/Tau exon 10. Binds to muscle-specific splicing enhancer (MSE) intronic sites flanking the alternative exon 5 of TNNT2 pre-mRNA. The sequence is that of CUGBP Elav-like family member 3 (Celf3) from Mus musculus (Mouse).